Here is a 465-residue protein sequence, read N- to C-terminus: Beta-1,2-xylosyltransferase XYXT1 (465 aa).

At 1–11 the chain is on the cytoplasmic side; sequence MKAAVRSKKSK. The chain crosses the membrane as a helical; Signal-anchor for type II membrane protein span at residues 12 to 32; the sequence is GSFCHPPLLLLIVAIQFLVIY. At 33–465 the chain is on the lumenal side; that stretch reads SPTLDQYMVM…VLLKALHLLR (433 aa). N-linked (GlcNAc...) asparagine glycosylation is found at Asn-80, Asn-118, Asn-125, Asn-266, and Asn-403.

It belongs to the glycosyltransferase 61 family. Widely expressed.

Its subcellular location is the golgi apparatus membrane. The protein operates within glycan metabolism. Glycosyltransferase involved in the xylosylation of xylan, the major hemicellulose (non-cellulosic component) of primary and secondary walls of angiosperms. Possesses beta-1,2-xylosyltransferase activity, transferring xylose from UDP-xylose to the xylan backbone. Catalyzes the addition of 2-O-xylosyl side chains to the xylan backbone. This is Beta-1,2-xylosyltransferase XYXT1 from Oryza sativa subsp. japonica (Rice).